The following is a 492-amino-acid chain: RNA helicase CrhR (492 aa).

Residues 7 to 35 (STFADLGLSEKRCQLLADIGFEAPTQIQT) carry the Q motif motif. In terms of domain architecture, Helicase ATP-binding spans 38 to 207 (IPLLLSGRDM…NQFLNDPALV (170 aa)). 51-58 (SQTGTGKT) is a binding site for ATP. A DEAD box motif is present at residues 155–158 (DEAD). The Helicase C-terminal domain occupies 234 to 379 (KALQPILEME…VCTIPNRSQV (146 aa)). Residues 451 to 492 (VLRRGRNAGGGQNKSGGGYQGKPGKPRRSSGGRRPAYSDRQQ) form a disordered region. Over residues 457-471 (NAGGGQNKSGGGYQG) the composition is skewed to gly residues.

This sequence belongs to the DEAD box helicase family.

It localises to the cytoplasm. The protein resides in the cell inner membrane. It is found in the cellular thylakoid membrane. It carries out the reaction ATP + H2O = ADP + phosphate + H(+). Its activity is regulated as follows. Helicase inhibited by the slowly-hydrolyzing ATP analog ATP-gamma-S. Protein is rapidly degraded upon shifting from 20 to 30 degrees Celsius, the degradation machinery is only transiently present in cells grown at 30 degrees Celsius, is inhibited by commercial protease inhibitors and requires full-length protein expression (the N-terminal fragment does not induce proteolysis although it can be degraded by wild-type extract). An ATP-dependent bidirectional RNA helicase with RNA-dependent ATPase activity; does not unwind dsDNA, uses only (d)ATP. Also has ATP-dependent RNA annealing activity; concurrent annealing and helicase activity promote strand-exchange activity. In vitro has low helicase processivity, annealing processivity is probably higher. Required for correct cold adaptation, probably by aiding translation of mRNAs required for photosynthesis and electron transport. Probably regulates the cold-shock-inducible expression of the GroESL chaperones. May partially regulate its own expression at both the transcriptional and post-transcriptional level (experiments used a construct expressing a 25 kDa trunacted protein which might have dominant-negative effects); is probably not directly involved in the pathway responsible for mRNA degradation. The sequence is that of RNA helicase CrhR from Synechocystis sp. (strain ATCC 27184 / PCC 6803 / Kazusa).